We begin with the raw amino-acid sequence, 232 residues long: RNA chaperone ProQ (232 aa).

The disordered stretch occupies residues 105–182 (EAKARVQAQR…REEQHTPVSD (78 aa)). A compositionally biased stretch (basic and acidic residues) spans 117-136 (QQAKKREAAAAAGEKEDAPR). Residues 137–146 (RERKPRPTTP) show a composition bias toward basic residues. Basic and acidic residues predominate over residues 147–177 (RRKEGAERKPRSQKPVEKAPKTVKAPREEQH).

The protein belongs to the ProQ family.

It is found in the cytoplasm. RNA chaperone with significant RNA binding, RNA strand exchange and RNA duplexing activities. May regulate ProP activity through an RNA-based, post-transcriptional mechanism. The polypeptide is RNA chaperone ProQ (Escherichia coli (strain UTI89 / UPEC)).